We begin with the raw amino-acid sequence, 556 residues long: 2-isopropylmalate synthase (556 aa).

Positions Pro-33 to Asp-307 constitute a Pyruvate carboxyltransferase domain. The Mg(2+) site is built by Asp-42, His-246, His-248, and Asn-282. The interval Ala-439 to Ala-556 is regulatory domain.

The protein belongs to the alpha-IPM synthase/homocitrate synthase family. LeuA type 2 subfamily. In terms of assembly, homodimer. Mg(2+) serves as cofactor.

It localises to the cytoplasm. The enzyme catalyses 3-methyl-2-oxobutanoate + acetyl-CoA + H2O = (2S)-2-isopropylmalate + CoA + H(+). The protein operates within amino-acid biosynthesis; L-leucine biosynthesis; L-leucine from 3-methyl-2-oxobutanoate: step 1/4. In terms of biological role, catalyzes the condensation of the acetyl group of acetyl-CoA with 3-methyl-2-oxobutanoate (2-ketoisovalerate) to form 3-carboxy-3-hydroxy-4-methylpentanoate (2-isopropylmalate). The sequence is that of 2-isopropylmalate synthase from Pseudomonas savastanoi pv. phaseolicola (strain 1448A / Race 6) (Pseudomonas syringae pv. phaseolicola (strain 1448A / Race 6)).